A 183-amino-acid chain; its full sequence is Small ribosomal subunit protein uS4 (183 aa).

The S4 RNA-binding domain maps to 106-168 (RRLETLVYKK…ETSPFTDENH (63 aa)). The disordered stretch occupies residues 158 to 183 (NETSPFTDENHPLRMEMSGTKEEENE). Over residues 165–183 (DENHPLRMEMSGTKEEENE) the composition is skewed to basic and acidic residues.

Belongs to the universal ribosomal protein uS4 family. Part of the 30S ribosomal subunit. Contacts protein S5. The interaction surface between S4 and S5 is involved in control of translational fidelity.

Its function is as follows. One of the primary rRNA binding proteins, it binds directly to 16S rRNA where it nucleates assembly of the body of the 30S subunit. In terms of biological role, with S5 and S12 plays an important role in translational accuracy. The protein is Small ribosomal subunit protein uS4 of Picrophilus torridus (strain ATCC 700027 / DSM 9790 / JCM 10055 / NBRC 100828 / KAW 2/3).